A 4841-amino-acid chain; its full sequence is Nonribosomal peptide synthetase 2 (4841 aa).

The interval 26–429 (VKPPNQNVAL…GRLSDGQVKL (404 aa)) is adenylation 1. The region spanning 531 to 604 (EPVDEFESSL…DIIFAARRQI (74 aa)) is the Carrier 1 domain. O-(pantetheine 4'-phosphoryl)serine is present on S565. The tract at residues 640-1042 (EEIIPCTPLQ…ILERPTQEIK (403 aa)) is condensation 1. The interval 1072-1463 (FEDVVRKHPE…GRIDDQVKLR (392 aa)) is adenylation 2. Residues 1587 to 1665 (EGDWSRMDLV…QLAKHLEGKP (79 aa)) form the Carrier 2 domain. S1625 carries the O-(pantetheine 4'-phosphoryl)serine modification. A condensation 2 region spans residues 1702–2043 (ILPCTPLQEA…QTVWELEADS (342 aa)). Residues 2139 to 2212 (SEVELDVRQV…KIAAKLLENR (74 aa)) enclose the Carrier 3 domain. S2173 carries the post-translational modification O-(pantetheine 4'-phosphoryl)serine. A condensation 3 region spans residues 2248–2663 (AVLPCTPLQS…NHLATEDEAF (416 aa)). Residues 2695 to 3090 (AAVHPNKLAL…GRADDQVKLR (396 aa)) are adenylation 3. Residues 3219-3293 (QDILVLLYDA…DLANCLAKAA (75 aa)) enclose the Carrier 4 domain. Residue S3253 is modified to O-(pantetheine 4'-phosphoryl)serine. The interval 3333–3735 (IAPCSPLQEG…DLAAESPQSE (403 aa)) is condensation 4. Residues 3759–3838 (QNSFEWTSEA…KMITELASIT (80 aa)) enclose the Carrier 5 domain. The residue at position 3799 (S3799) is an O-(pantetheine 4'-phosphoryl)serine. The condensation 5 stretch occupies residues 3873-4242 (SVLPPTHLQE…VEAEAVSDSL (370 aa)). The Carrier 6 domain occupies 4318 to 4394 (IEWNQNEIGI…EMAQKADTKL (77 aa)). S4355 bears the O-(pantetheine 4'-phosphoryl)serine mark. The segment at 4430 to 4726 (EVLPALPMQV…DIHLITSESR (297 aa)) is condensation 6.

This sequence belongs to the NRP synthetase family.

It participates in siderophore biosynthesis. Functionally, nonribosomal peptide synthetase; part of the gene cluster that mediates the biosynthesis of hydroxamate-containing siderophores that play a critical role in virulence. Gibberella zeae produces extracellular coprogen-type siderophores as well as the intracellular siderophore ferricrocin. The role of extracellular siderophores is to supply iron to the fungus during plant infection, and the intracellular ferricrocin is required for intracellular iron distribution and storage with a crucial role in ascus and ascospore development. SID1 catalyzes the conversion of L-ornithine to N(5)-hydroxyornithine, the first step in the biosynthesis of all hydroxamate-containing siderophores. The assembly of extracellular coprogen-type siderophores is performed by the nonribosomal peptide synthetase (NRPS) NPS6 whereas the intracellular siderophore ferricrocin is assembled by NPS2. This chain is Nonribosomal peptide synthetase 2, found in Gibberella zeae (strain ATCC MYA-4620 / CBS 123657 / FGSC 9075 / NRRL 31084 / PH-1) (Wheat head blight fungus).